Here is a 478-residue protein sequence, read N- to C-terminus: Histidine--tRNA ligase (478 aa).

This sequence belongs to the class-II aminoacyl-tRNA synthetase family. In terms of assembly, homodimer.

The protein resides in the cytoplasm. It catalyses the reaction tRNA(His) + L-histidine + ATP = L-histidyl-tRNA(His) + AMP + diphosphate + H(+). This chain is Histidine--tRNA ligase (hisS), found in Xanthomonas axonopodis pv. citri (strain 306).